The sequence spans 618 residues: Paraneoplastic antigen-like protein 5 (618 aa).

Basic and acidic residues predominate over residues 390–399 (AGEEGQRKES). Disordered stretches follow at residues 390–409 (AGEE…EPDE), 451–475 (RDTL…EGQQ), and 519–549 (SMIT…ELRM).

The protein belongs to the PNMA family. In terms of tissue distribution, restricted to testis, where expression is low. Not detected in the brain.

It is found in the nucleus. In Mus musculus (Mouse), this protein is Paraneoplastic antigen-like protein 5 (Pnma5).